A 1219-amino-acid polypeptide reads, in one-letter code: Protein jagged-1 (1219 aa).

Positions 1-33 (MRSPRTRGRPGRPLSLLLALLCALRAKVCGASG) are cleaved as a signal peptide. Residues 34 to 1067 (QFELEILSMQ…QRRPLKNRTD (1034 aa)) lie on the Extracellular side of the membrane. A glycan (N-linked (GlcNAc...) asparagine) is linked at Asn143. The DSL domain maps to 185 to 229 (VTCDDHYYGFGCNKFCRPRDDFFGHYACDQNGNKTCMEGWMGPEC). 2 disulfide bridges follow: Cys187–Cys196 and Cys200–Cys212. The important for interaction with NOTCH1 stretch occupies residues 199–207 (FCRPRDDFF). Asn217 carries an N-linked (GlcNAc...) asparagine glycan. Disulfide bonds link Cys220-Cys229, Cys234-Cys245, Cys238-Cys251, Cys253-Cys262, Cys265-Cys276, Cys271-Cys282, Cys284-Cys293, Cys300-Cys312, Cys306-Cys322, Cys324-Cys333, Cys340-Cys351, Cys345-Cys360, Cys362-Cys371, Cys378-Cys389, Cys383-Cys398, Cys400-Cys409, Cys416-Cys427, Cys421-Cys436, Cys438-Cys447, Cys454-Cys464, Cys458-Cys473, Cys475-Cys484, Cys491-Cys502, Cys496-Cys511, Cys513-Cys522, Cys529-Cys540, Cys534-Cys549, Cys551-Cys560, Cys578-Cys605, Cys599-Cys615, Cys617-Cys626, Cys633-Cys644, Cys638-Cys653, Cys655-Cys664, Cys671-Cys682, Cys676-Cys691, Cys693-Cys702, Cys709-Cys720, Cys714-Cys729, and Cys731-Cys740. The region spanning 230–263 (NKAICRQGCSPKHGSCKLPGDCRCQYGWQGLYCD) is the EGF-like 1 domain. The EGF-like 2; atypical domain maps to 264–294 (KCIPHPGCVHGTCNEPWQCLCETNWGGQLCD). EGF-like domains are found at residues 296–334 (DLNY…PNCE) and 336–372 (AEHA…PTCS). One can recognise an EGF-like 5; calcium-binding domain in the interval 374–410 (NIDDCSPNNCSHGGTCQDLVNGFKCVCPPQWTGKTCQ). N-linked (GlcNAc...) asparagine glycosylation occurs at Asn382. The EGF-like 6; calcium-binding domain maps to 412-448 (DANECEAKPCVNARSCKNLIASYYCDCLPGWMGQNCD). The 36-residue stretch at 450 to 485 (NINDCLGQCQNDASCRDLVNGYRCICPPGYAGDHCE) folds into the EGF-like 7; calcium-binding domain. The region spanning 487-523 (DIDECASNPCLNGGHCQNEINRFQCLCPTGFSGNLCQ) is the EGF-like 8; calcium-binding domain. 2 consecutive EGF-like domains span residues 525–561 (DIDY…KNCS) and 586–627 (DTPE…TYCH). N-linked (GlcNAc...) asparagine glycosylation is present at Asn559. Residues 629–665 (NINDCEGNPCTNGGTCIDGVNSYKCICSDGWEGAHCE) enclose the EGF-like 11; calcium-binding domain. Residues 667-703 (NINDCSQNPCHYGGTCRDLVNDFYCDCKNGWKGKTCH) form the EGF-like 12; calcium-binding domain. 2 consecutive EGF-like domains span residues 705–741 (RDSQ…TTCN) and 744–780 (RNSS…PICT). N-linked (GlcNAc...) asparagine glycosylation is present at Asn745. 11 cysteine pairs are disulfide-bonded: Cys748–Cys759, Cys753–Cys768, Cys770–Cys779, Cys786–Cys797, Cys791–Cys806, Cys808–Cys817, Cys824–Cys835, Cys829–Cys844, Cys846–Cys855, Cys925–Cys936, and Cys948–Cys958. Residues 782 to 818 (NTNDCSPHPCYNSGTCVDGDNWYRCECAPGFAGPDCR) enclose the EGF-like 15; calcium-binding domain. In terms of domain architecture, EGF-like 16; calcium-binding spans 820-856 (NINECQSSPCAFGATCVDEINGYQCICPPGHSGAKCH). Asn960, Asn991, Asn1045, and Asn1064 each carry an N-linked (GlcNAc...) asparagine glycan. Residues 1068-1093 (FLVPLLSSVLTVAWVCCLVTAFYWCV) form a helical membrane-spanning segment. Over 1094 to 1219 (RKRRRKPSSH…QSLNRMEYIV (126 aa)) the chain is Cytoplasmic. Residues 1182–1219 (REEKVPQRTPTKHPNWTNKQDNRDLESAQSLNRMEYIV) form a disordered region. Residues 1189 to 1200 (RTPTKHPNWTNK) are compositionally biased toward polar residues.

In terms of assembly, interacts with NOTCH1. Interacts with NOTCH2 and NOTCH3. As to expression, widely expressed in a variety of tissues.

It is found in the membrane. Its subcellular location is the cell membrane. Its function is as follows. Ligand for multiple Notch receptors and involved in the mediation of Notch signaling. May be involved in cell-fate decisions during hematopoiesis. Enhances fibroblast growth factor-induced angiogenesis (in vitro). Seems to be involved in early and late stages of mammalian cardiovascular development. Inhibits myoblast differentiation. May regulate fibroblast growth factor-induced angiogenesis. This chain is Protein jagged-1 (Jag1), found in Rattus norvegicus (Rat).